A 90-amino-acid polypeptide reads, in one-letter code: Probable Fe(2+)-trafficking protein (90 aa).

This sequence belongs to the Fe(2+)-trafficking protein family.

Functionally, could be a mediator in iron transactions between iron acquisition and iron-requiring processes, such as synthesis and/or repair of Fe-S clusters in biosynthetic enzymes. This Cupriavidus necator (strain ATCC 17699 / DSM 428 / KCTC 22496 / NCIMB 10442 / H16 / Stanier 337) (Ralstonia eutropha) protein is Probable Fe(2+)-trafficking protein.